We begin with the raw amino-acid sequence, 176 residues long: Xanthine-guanine phosphoribosyltransferase (176 aa).

5-phospho-alpha-D-ribose 1-diphosphate-binding positions include 51-52 (RG), Arg88, and 111-119 (DDLVDSGKT). A GMP-binding site is contributed by Arg88. Position 112 (Asp112) interacts with Mg(2+). Asp115 and Ile158 together coordinate guanine. Residues Asp115 and Ile158 each coordinate xanthine. GMP is bound by residues 115–119 (DSGKT) and 157–158 (WI).

The protein belongs to the purine/pyrimidine phosphoribosyltransferase family. XGPT subfamily. Homotetramer. It depends on Mg(2+) as a cofactor.

It localises to the cell inner membrane. It carries out the reaction GMP + diphosphate = guanine + 5-phospho-alpha-D-ribose 1-diphosphate. It catalyses the reaction XMP + diphosphate = xanthine + 5-phospho-alpha-D-ribose 1-diphosphate. The enzyme catalyses IMP + diphosphate = hypoxanthine + 5-phospho-alpha-D-ribose 1-diphosphate. Its pathway is purine metabolism; GMP biosynthesis via salvage pathway; GMP from guanine: step 1/1. It functions in the pathway purine metabolism; XMP biosynthesis via salvage pathway; XMP from xanthine: step 1/1. Functionally, purine salvage pathway enzyme that catalyzes the transfer of the ribosyl-5-phosphate group from 5-phospho-alpha-D-ribose 1-diphosphate (PRPP) to the N9 position of the 6-oxopurines guanine and xanthine to form the corresponding ribonucleotides GMP (guanosine 5'-monophosphate) and XMP (xanthosine 5'-monophosphate), with the release of PPi. To a lesser extent, also acts on hypoxanthine. The polypeptide is Xanthine-guanine phosphoribosyltransferase (Ruegeria sp. (strain TM1040) (Silicibacter sp.)).